Consider the following 335-residue polypeptide: Ketol-acid reductoisomerase (NADP(+)) 2 (335 aa).

Residues 1–180 (MKTYYEKDAN…GCTRAGVIET (180 aa)) enclose the KARI N-terminal Rossmann domain. NADP(+) contacts are provided by residues 24–27 (YGSQ), arginine 47, serine 51, and 81–84 (DEQQ). Histidine 106 is a catalytic residue. Glycine 132 lines the NADP(+) pocket. Residues 181–326 (TFQEETETDL…AELREMMSWI (146 aa)) form the KARI C-terminal knotted domain. Mg(2+)-binding residues include aspartate 189, glutamate 193, glutamate 225, and glutamate 229. Serine 250 is a substrate binding site.

The protein belongs to the ketol-acid reductoisomerase family. It depends on Mg(2+) as a cofactor.

It carries out the reaction (2R)-2,3-dihydroxy-3-methylbutanoate + NADP(+) = (2S)-2-acetolactate + NADPH + H(+). The catalysed reaction is (2R,3R)-2,3-dihydroxy-3-methylpentanoate + NADP(+) = (S)-2-ethyl-2-hydroxy-3-oxobutanoate + NADPH + H(+). It participates in amino-acid biosynthesis; L-isoleucine biosynthesis; L-isoleucine from 2-oxobutanoate: step 2/4. It functions in the pathway amino-acid biosynthesis; L-valine biosynthesis; L-valine from pyruvate: step 2/4. Involved in the biosynthesis of branched-chain amino acids (BCAA). Catalyzes an alkyl-migration followed by a ketol-acid reduction of (S)-2-acetolactate (S2AL) to yield (R)-2,3-dihydroxy-isovalerate. In the isomerase reaction, S2AL is rearranged via a Mg-dependent methyl migration to produce 3-hydroxy-3-methyl-2-ketobutyrate (HMKB). In the reductase reaction, this 2-ketoacid undergoes a metal-dependent reduction by NADPH to yield (R)-2,3-dihydroxy-isovalerate. This Bacillus cereus (strain ATCC 10987 / NRS 248) protein is Ketol-acid reductoisomerase (NADP(+)) 2.